A 612-amino-acid polypeptide reads, in one-letter code: Proton channel OTOP1 (612 aa).

Low complexity predominate over residues 1–46 (MLEGLGSPASPRAAASASVAGSSGPAACSPPSSSAPRSPESPAPRR). Positions 1-50 (MLEGLGSPASPRAAASASVAGSSGPAACSPPSSSAPRSPESPAPRRGGVR) are disordered. Residues 1–58 (MLEGLGSPASPRAAASASVAGSSGPAACSPPSSSAPRSPESPAPRRGGVRASVPQKLA) are Cytoplasmic-facing. A helical membrane pass occupies residues 59–80 (EMLSSQYGLIVFVAGLLLLLAW). The Extracellular portion of the chain corresponds to 81–88 (AVHAAGVS). A helical membrane pass occupies residues 89-112 (KSDLLCFLTALMLLQLLWMLWYVG). The Cytoplasmic segment spans residues 113 to 130 (RSSAHRRLFRLKDTHAGA). Residues 131–153 (GWLRGSITLFAVITVILGCLKIG) traverse the membrane as a helical segment. Residues 154–163 (YFIGFSECLS) lie on the Extracellular side of the membrane. The helical transmembrane segment at 164–188 (ATEGVFPVTHSVHTLLQVYFLWGHA) threads the bilayer. Residues 189-196 (KDIIQSFK) lie on the Cytoplasmic side of the membrane. A helical transmembrane segment spans residues 197 to 223 (TLERFGVIHSVFTNLLLWANGVLNESK). The Extracellular portion of the chain corresponds to 224–264 (HQLNEHKERLITLGFGNITTVLDDHTPQCNCTPPTLCTAIS). A helical transmembrane segment spans residues 265–290 (HGIYYLYPFNIEYQILASTMLYVLWK). At 291–311 (NIGRKVDSHQHQKMQFKSDGV) the chain is on the cytoplasmic side. Residues 312 to 334 (MVGAVLGLTVLAATIAVVVVYLI) form a helical membrane-spanning segment. Residues 335–344 (HIGRSKTKSE) lie on the Extracellular side of the membrane. Residues 345–370 (SALIMFYLYAITLLMLMGAAGLAGIR) traverse the membrane as a helical segment. Topologically, residues 371 to 388 (IYRIDEKSLDESKNPARK) are cytoplasmic. A helical transmembrane segment spans residues 389 to 413 (LDSDLLVGTASGSWLISWGSILAIL). Over 414 to 423 (CAEGHPRYTW) the chain is Extracellular. Residues 424–444 (YNLPYSILAIVEKYIQNLFIF) traverse the membrane as a helical segment. At 445–544 (ESIHREPEKL…QGNAKRKVLR (100 aa)) the chain is on the cytoplasmic side. Positions 499–525 (ANGNVCMRESHDKEEEKQEESSWGGSP) are disordered. A compositionally biased stretch (basic and acidic residues) spans 506 to 518 (RESHDKEEEKQEE). The helical transmembrane segment at 545–563 (NIAAFLFLCNISLWIPPAF) threads the bilayer. Topologically, residues 564-581 (GCRPEYDNGLEEIVFGFE) are extracellular. A helical transmembrane segment spans residues 582 to 605 (PWIIVVNLAMPFSIFYRMHAAASL). Residues 606–612 (FEVYCKI) are Cytoplasmic-facing.

This sequence belongs to the otopetrin family. As to quaternary structure, homodimer. Interacts with STAT1, independently of STAT1 phosphorylation status.

It is found in the cell membrane. The protein localises to the cell projection. The protein resides in the microvillus. It carries out the reaction H(+)(in) = H(+)(out). Activated by both acid and alkali, with proton influx in response to extracellular acid and proton efflux during alkali stimulation. Inhibited by Zn(2+); this inhibition is thought to be pH-sensitive. Currents evoked in response to mild acid (pH 6.0) stimulus may also be mildly potentiated by exposure to Zn(2+). Activated by NH(4)Cl. Functionally, proton-selective ion channel. Biphasically modulated by acid and alkali, mediating proton influx and efflux in response to extracellular acid and base stimulation, respectively. Sour taste receptor, which carries inward currents in response to extracellular acidification. Sensor for ammonium chloride (NH(4)Cl) in taste receptor cells. NH(4)Cl acts by increasing the intracellular pH, thereby generating a driving force for proton entry through OTOP1 channel. Might also participate in alkaline sensation. Plays a role in the regulation of Ca(2+) flux in response to purigenic (ATP, ADP and UDP) stimuli, leading to increase in cytosolic Ca(2+) due to influx of extracellular calcium. May play this role by inhibiting P2Y purinoceptor-mediated Ca(2+) release in a Ca(2+)-dependent manner and promote an influx of Ca(2+) in response to ATP. Through this mechanism and possibly others, plays a role in the formation and function of calcium carbonate-based structures in the vestibular system of the inner ear, called otoconia, that sense gravity and linear acceleration. In obesity, may attenuate adipose tissue inflammation, through the negative regulation of IFNG signaling, hence may play an adaptive role in the maintainance of metabolic homeostasis. Following alkali activation, may also be permeable Na(+), K(+), Cs(+) and Li(+). The chain is Proton channel OTOP1 from Homo sapiens (Human).